The chain runs to 218 residues: Small ribosomal subunit protein uS3 (218 aa).

Residues 38–106 form the KH type-2 domain; that stretch reads IREYISKRLQ…RVHINIVEIK (69 aa).

It belongs to the universal ribosomal protein uS3 family. Part of the 30S ribosomal subunit. Forms a tight complex with proteins S10 and S14.

Functionally, binds the lower part of the 30S subunit head. Binds mRNA in the 70S ribosome, positioning it for translation. This Geobacillus kaustophilus (strain HTA426) protein is Small ribosomal subunit protein uS3.